The following is a 416-amino-acid chain: Orexin/Hypocretin receptor type 1 (416 aa).

A disordered region spans residues methionine 1–histidine 22. Residues methionine 1–glutamate 46 are Extracellular-facing. Residues aspartate 26 to tyrosine 41 form a required for response to orexin-A region. The chain crosses the membrane as a helical span at residues tryptophan 47 to valine 67. Residues cysteine 68–asparagine 82 are Cytoplasmic-facing. A helical membrane pass occupies residues tyrosine 83–leucine 105. Over valine 106–cysteine 119 the chain is Extracellular. Cysteines 119 and 202 form a disulfide. A helical transmembrane segment spans residues lysine 120 to isoleucine 140. Topologically, residues alanine 141 to arginine 160 are cytoplasmic. A helical transmembrane segment spans residues alanine 161–valine 182. Topologically, residues methionine 183–lysine 213 are extracellular. N-linked (GlcNAc...) asparagine glycosylation occurs at asparagine 194. Residues isoleucine 214–tyrosine 235 form a helical membrane-spanning segment. The Cytoplasmic portion of the chain corresponds to phenylalanine 236 to lysine 298. The chain crosses the membrane as a helical span at residues methionine 299–lysine 321. The Extracellular segment spans residues arginine 322–valine 336. The helical transmembrane segment at tyrosine 337–phenylalanine 360 threads the bilayer. The Cytoplasmic segment spans residues leucine 361–serine 416.

It belongs to the G-protein coupled receptor 1 family. In terms of tissue distribution, highly expressed in the brain in the prefrontal cortex, hippocampus, paraventricular thalamus, ventromedial hypothalamus, arcuate nucleus, dorsal raphe nucleus, and locus coeruleus. Not detected in the spleen, lung, liver, skeletal muscle, kidney and testis. Orexin receptor mRNA expression has also been reported in the adrenal gland, enteric nervous system, and pancreas.

It localises to the cell membrane. Moderately selective excitatory receptor for orexin-A and, with a lower affinity, for orexin-B neuropeptide. Triggers an increase in cytoplasmic Ca(2+) levels in response to orexin-A binding. This Rattus norvegicus (Rat) protein is Orexin/Hypocretin receptor type 1.